The following is a 419-amino-acid chain: Alpha-galactosidase A (419 aa).

The signal sequence occupies residues 1–31; sequence MKLLSRDTRLVCELALCPLALVFWSILGVRA. Disulfide bonds link C52–C94 and C56–C63. An N-linked (GlcNAc...) asparagine glycan is attached at N139. A disulfide bridge links C142 with C172. Catalysis depends on D170, which acts as the Nucleophile. At Y186 the chain carries Phosphotyrosine. Residue N192 is glycosylated (N-linked (GlcNAc...) asparagine). Residues C202 and C223 are joined by a disulfide bond. 203 to 207 contributes to the substrate binding site; sequence EWPLY. N215 carries an N-linked (GlcNAc...) asparagine glycan. The Proton donor role is filled by D231. The cysteines at positions 378 and 382 are disulfide-linked.

It belongs to the glycosyl hydrolase 27 family. In terms of assembly, homodimer.

The protein localises to the lysosome. It carries out the reaction Hydrolysis of terminal, non-reducing alpha-D-galactose residues in alpha-D-galactosides, including galactose oligosaccharides, galactomannans and galactolipids.. The catalysed reaction is a globoside Gb3Cer (d18:1(4E)) + H2O = a beta-D-Gal-(1-&gt;4)-beta-D-Glc-(1&lt;-&gt;1)-Cer(d18:1(4E)) + D-galactose. The enzyme catalyses a globoside Gb3Cer + H2O = a beta-D-galactosyl-(1-&gt;4)-beta-D-glucosyl-(1&lt;-&gt;1)-ceramide + D-galactose. With respect to regulation, galactosylgalactosylglucosylceramidase activity is stimulated by saposin B and ammonium chloride. Catalyzes the hydrolysis of glycosphingolipids and participates in their degradation in the lysosome. The protein is Alpha-galactosidase A of Mus musculus (Mouse).